The sequence spans 245 residues: 8-amino-3,8-dideoxy-manno-octulosonate cytidylyltransferase (245 aa).

This sequence belongs to the KdsB family.

The protein resides in the cytoplasm. It carries out the reaction 8-amino-3,8-dideoxy-alpha-D-manno-octulosonate + CTP = CMP-8-amino-3,8-dideoxy-alpha-D-manno-oct-2-ulosonate + diphosphate. Its pathway is bacterial outer membrane biogenesis; lipopolysaccharide biosynthesis. Functionally, activates KDO8N (a required 8-carbon sugar) for incorporation into bacterial lipopolysaccharide in the Shewanella genus. This chain is 8-amino-3,8-dideoxy-manno-octulosonate cytidylyltransferase, found in Shewanella putrefaciens (strain CN-32 / ATCC BAA-453).